A 251-amino-acid polypeptide reads, in one-letter code: MSGSNPKAAAAASAAGPGGLVAGKEEKKKAGGGVLNRLKARRQAPHHAADDGVGAAVTEQELLALDTIRPEHVLRLSRVTENYLCKPEDNIYSIDFTRFKIRDLETGTVLFEIAKPCVSDQEEDEEEGGGDVDISAGRFVRYQFTPAFLRLRTVGATVEFTVGDKPVSNFRMIERHYFREHLLKNFDFDFGFCIPSSRNTCEHIYEFPQLSEDVIRLMIENPYETRSDSFYFVDNKLIMHNKADYAYNGGQ.

Positions 1–28 are disordered; that stretch reads MSGSNPKAAAAASAAGPGGLVAGKEEKK. S2 carries the N-acetylserine modification. K24 is modified (N6-acetyllysine). Y142 is a binding site for tetradecanoate.

The protein belongs to the PDE6D/unc-119 family. Found in a complex with ARL3, RP2 and UNC119B; RP2 induces hydrolysis of GTP ARL3 in the complex, leading to the release of UNC119B. Interacts with NPHP3 (when myristoylated). Interacts with CYS1 (when myristoylated). Interacts with MACIR; interaction only takes place when UNC119B is not liganded with myristoylated proteins.

It is found in the cell projection. It localises to the cilium. Its function is as follows. Myristoyl-binding protein that acts as a cargo adapter: specifically binds the myristoyl moiety of a subset of N-terminally myristoylated proteins and is required for their localization. Binds myristoylated NPHP3 and plays a key role in localization of NPHP3 to the primary cilium membrane. Does not bind all myristoylated proteins. Probably plays a role in trafficking proteins in photoreceptor cells. This Homo sapiens (Human) protein is Protein unc-119 homolog B (UNC119B).